Consider the following 274-residue polypeptide: Large ribosomal subunit protein uL2c (274 aa).

2 disordered regions span residues 1 to 22 (MAIHLYKTSTPSTRNGAVDNQV) and 225 to 274 (PVDH…RRSK).

Belongs to the universal ribosomal protein uL2 family. Part of the 50S ribosomal subunit.

The protein localises to the plastid. It localises to the chloroplast. The chain is Large ribosomal subunit protein uL2c (rpl2) from Silene latifolia (White campion).